The following is a 320-amino-acid chain: Cytochrome f (320 aa).

An N-terminal signal peptide occupies residues 1–35 (MQNRNTFSWVKEQMTRFISVSIMIYVITRTSIANA). Heme contacts are provided by tyrosine 36, cysteine 56, cysteine 59, and histidine 60. A helical membrane pass occupies residues 286–306 (VQGLLFFLASVILAQIFLVLK).

It belongs to the cytochrome f family. The 4 large subunits of the cytochrome b6-f complex are cytochrome b6, subunit IV (17 kDa polypeptide, petD), cytochrome f and the Rieske protein, while the 4 small subunits are PetG, PetL, PetM and PetN. The complex functions as a dimer. Requires heme as cofactor.

The protein resides in the plastid. It is found in the chloroplast thylakoid membrane. Functionally, component of the cytochrome b6-f complex, which mediates electron transfer between photosystem II (PSII) and photosystem I (PSI), cyclic electron flow around PSI, and state transitions. The sequence is that of Cytochrome f from Acorus calamus (Sweet flag).